A 442-amino-acid chain; its full sequence is UDP-glucosyltransferase 29 (442 aa).

His20 functions as the Proton acceptor in the catalytic mechanism. An anthocyanidin is bound at residue His20. Asp116 acts as the Charge relay in catalysis. UDP-alpha-D-glucose is bound by residues Thr138, Ala318, Gln320, His335, Trp338, Ser340, Glu343, Asp359, and Gln360.

The protein belongs to the UDP-glycosyltransferase family. Expressed at higher levels in roots than in leaves.

It carries out the reaction (20S)-ginsenoside F2 + UDP-alpha-D-glucose = (20S)-ginsenoside Rd + UDP + H(+). The catalysed reaction is (20S)-ginsenoside Rh2 + UDP-alpha-D-glucose = (20S)-ginsenoside Rg3 + UDP + H(+). The protein operates within secondary metabolite biosynthesis; terpenoid biosynthesis. Component of the dammarane-type triterpene saponins (e.g. PPD-type ginsenosides or panaxosides) biosynthetic pathway. Glycosyltransferase that catalyzes the conversion of ginsenoside Rh2 to ginsenoside Rg3. Triggers the biosynthesis of ginsenoside Rd from ginsenoside F2. This chain is UDP-glucosyltransferase 29, found in Panax ginseng (Korean ginseng).